The sequence spans 368 residues: MIALIIGMLVSLIVTLVGTPLLIRLVHKLHYGQYIRQDGPQSHLVKRGTPTLGGVVINFAILLGWASSALYRYLRSGDVPSWSAALVLFAMLSMGLLGFIDDFAKVRKKQNEGLSVGGKFIGQFIFATIYAVLALLIPTKSGFPSAQAGISFIEQPFFNFDFAGRAVAIILFVIWVNFLMTAWTNAVNLTDGLDGLAAGSSMIAFTGFGIIAFWESYHIKGGSHGGYSYAVSDPLDLTVIAVCAAVACFGFLWYNSNPASIFMGDTGSLALGGLFAALSIATHTEFLAVVLGGLYVMEAMSDVIQVGYFKMTHKRVFKMAPIHHHFELEGWTETKVVVRFWMIELIFVLLALTIFYGDWVTRSGLLFS.

Helical transmembrane passes span 2-22, 51-71, 80-100, 117-137, 167-187, 193-213, 234-254, 271-291, and 340-360; these read IALI…TPLL, TLGG…SALY, PSWS…LGFI, GGKF…ALLI, VAII…TNAV, LDGL…IIAF, PLDL…FLWY, LGGL…AVVL, and FWMI…GDWV.

This sequence belongs to the glycosyltransferase 4 family. MraY subfamily. Mg(2+) serves as cofactor.

The protein localises to the cell membrane. The enzyme catalyses UDP-N-acetyl-alpha-D-muramoyl-L-alanyl-gamma-D-glutamyl-meso-2,6-diaminopimeloyl-D-alanyl-D-alanine + di-trans,octa-cis-undecaprenyl phosphate = di-trans,octa-cis-undecaprenyl diphospho-N-acetyl-alpha-D-muramoyl-L-alanyl-D-glutamyl-meso-2,6-diaminopimeloyl-D-alanyl-D-alanine + UMP. It participates in cell wall biogenesis; peptidoglycan biosynthesis. Functionally, catalyzes the initial step of the lipid cycle reactions in the biosynthesis of the cell wall peptidoglycan: transfers peptidoglycan precursor phospho-MurNAc-pentapeptide from UDP-MurNAc-pentapeptide onto the lipid carrier undecaprenyl phosphate, yielding undecaprenyl-pyrophosphoryl-MurNAc-pentapeptide, known as lipid I. This is Phospho-N-acetylmuramoyl-pentapeptide-transferase from Bifidobacterium longum (strain DJO10A).